The following is a 417-amino-acid chain: Serine--tRNA ligase (417 aa).

232 to 234 contacts L-serine; it reads TAE. ATP is bound by residues 263–265 and V279; that span reads RRE. E286 lines the L-serine pocket. 350–353 contacts ATP; the sequence is EISS. S385 provides a ligand contact to L-serine.

Belongs to the class-II aminoacyl-tRNA synthetase family. Type-1 seryl-tRNA synthetase subfamily. As to quaternary structure, homodimer. The tRNA molecule binds across the dimer.

The protein resides in the cytoplasm. It carries out the reaction tRNA(Ser) + L-serine + ATP = L-seryl-tRNA(Ser) + AMP + diphosphate + H(+). It catalyses the reaction tRNA(Sec) + L-serine + ATP = L-seryl-tRNA(Sec) + AMP + diphosphate + H(+). It participates in aminoacyl-tRNA biosynthesis; selenocysteinyl-tRNA(Sec) biosynthesis; L-seryl-tRNA(Sec) from L-serine and tRNA(Sec): step 1/1. Its function is as follows. Catalyzes the attachment of serine to tRNA(Ser). Is also able to aminoacylate tRNA(Sec) with serine, to form the misacylated tRNA L-seryl-tRNA(Sec), which will be further converted into selenocysteinyl-tRNA(Sec). The sequence is that of Serine--tRNA ligase from Leptospira interrogans serogroup Icterohaemorrhagiae serovar copenhageni (strain Fiocruz L1-130).